The chain runs to 360 residues: UDP-N-acetylglucosamine--N-acetylmuramyl-(pentapeptide) pyrophosphoryl-undecaprenol N-acetylglucosamine transferase (360 aa).

Residues 15 to 17 (TGG), N128, R164, S192, I247, and Q292 each bind UDP-N-acetyl-alpha-D-glucosamine.

This sequence belongs to the glycosyltransferase 28 family. MurG subfamily.

It localises to the cell inner membrane. The catalysed reaction is di-trans,octa-cis-undecaprenyl diphospho-N-acetyl-alpha-D-muramoyl-L-alanyl-D-glutamyl-meso-2,6-diaminopimeloyl-D-alanyl-D-alanine + UDP-N-acetyl-alpha-D-glucosamine = di-trans,octa-cis-undecaprenyl diphospho-[N-acetyl-alpha-D-glucosaminyl-(1-&gt;4)]-N-acetyl-alpha-D-muramoyl-L-alanyl-D-glutamyl-meso-2,6-diaminopimeloyl-D-alanyl-D-alanine + UDP + H(+). It functions in the pathway cell wall biogenesis; peptidoglycan biosynthesis. In terms of biological role, cell wall formation. Catalyzes the transfer of a GlcNAc subunit on undecaprenyl-pyrophosphoryl-MurNAc-pentapeptide (lipid intermediate I) to form undecaprenyl-pyrophosphoryl-MurNAc-(pentapeptide)GlcNAc (lipid intermediate II). This Blochmanniella floridana protein is UDP-N-acetylglucosamine--N-acetylmuramyl-(pentapeptide) pyrophosphoryl-undecaprenol N-acetylglucosamine transferase.